The chain runs to 350 residues: Dihydroorotate dehydrogenase (quinone) (350 aa).

FMN is bound by residues 61–65 (AGLDK) and threonine 85. Lysine 65 serves as a coordination point for substrate. 110–114 (NRMGF) is a binding site for substrate. Residues asparagine 139 and asparagine 172 each contribute to the FMN site. A substrate-binding site is contributed by asparagine 172. The active-site Nucleophile is the serine 175. Asparagine 177 contacts substrate. FMN-binding residues include lysine 217 and threonine 245. A substrate-binding site is contributed by 246–247 (NT). Residues glycine 268, glycine 297, and 318 to 319 (YS) each bind FMN.

It belongs to the dihydroorotate dehydrogenase family. Type 2 subfamily. Monomer. It depends on FMN as a cofactor.

Its subcellular location is the cell membrane. It carries out the reaction (S)-dihydroorotate + a quinone = orotate + a quinol. It participates in pyrimidine metabolism; UMP biosynthesis via de novo pathway; orotate from (S)-dihydroorotate (quinone route): step 1/1. Its function is as follows. Catalyzes the conversion of dihydroorotate to orotate with quinone as electron acceptor. The polypeptide is Dihydroorotate dehydrogenase (quinone) (Flavobacterium lutescens).